The following is a 347-amino-acid chain: MKLHYCLCILLVVTFVPTALVLEDVTPLGTNQSSYNASFLSSFELSAGSYSGDDVIIAKEGTNVSLECLLTVDHYGEVHWYNSKGRQLHSRGGKWLVSDNFLNITSVAFDDRGLYTCIITSPTRASYSVTLRVIFTSGDMSVYYMVVCLIAFTITLILNVTRLCLMSTHLRKTEKAINEFFRTEGAEKLQKAFEIAKRIPIITSAKTLELAKVTQFKTMEFARYIEELARSVPLPPLILNCRAFVEEMFEAVRVDDPDDMGERIKERPALDAQSGIYVINPELGRSNSPGGDSDDGSLSEQGQEIAVQVSVHLQSETKSIGTDSQDSSHFSPPSDPASAEGSTHHRE.

A signal peptide spans Met1–Leu22. Over Glu23–Asp139 the chain is Extracellular. Asn31, Asn36, Asn63, and Asn103 each carry an N-linked (GlcNAc...) asparagine glycan. One can recognise an Ig-like C2-type domain in the interval Ala47 to Thr130. A disulfide bridge links Cys68 with Cys117. Residues Met140–Val160 traverse the membrane as a helical segment. Topologically, residues Thr161–Glu347 are cytoplasmic. Residues Asn280–Glu347 are disordered. Polar residues predominate over residues Val311–Ser331.

Post-translationally, glycosylated.

It is found in the cell membrane. Functionally, component of the elastin-associated microfibrils. This is Microfibril-associated glycoprotein 3 (Mfap3) from Rattus norvegicus (Rat).